Here is a 152-residue protein sequence, read N- to C-terminus: Proteolipid protein 2 (152 aa).

The region spanning 19–138 (FSRTKKGILL…DAYITFPLKQ (120 aa)) is the MARVEL domain. The next 4 helical transmembrane spans lie at 25–45 (GILLFAEIILCLVILICFSAS), 48–68 (SAYSSLSVIEMICAAVLLVFY), 85–105 (DFFRSLIATILYLITSIVVLV), and 112–132 (RVVAGILGLLATLLFGYDAYI).

The protein resides in the membrane. May play a role in cell differentiation in the intestinal epithelium. This chain is Proteolipid protein 2 (Plp2), found in Mus musculus (Mouse).